Consider the following 67-residue polypeptide: MGEISITKLLVIAALVVLLFGTKKLRTLGGDLGAAIKGFKKAMNDDDTGAKTPAASEAPAERLSHKE.

A helical transmembrane segment spans residues isoleucine 4 to glycine 21. Residues asparagine 44–glutamate 67 form a disordered region.

The protein belongs to the TatA/E family. TatE subfamily.

The protein localises to the cell inner membrane. Functionally, part of the twin-arginine translocation (Tat) system that transports large folded proteins containing a characteristic twin-arginine motif in their signal peptide across membranes. TatE shares overlapping functions with TatA. This Cronobacter sakazakii (strain ATCC BAA-894) (Enterobacter sakazakii) protein is Probable Sec-independent protein translocase protein TatE.